The chain runs to 457 residues: Flavin-containing monooxygenase FMO GS-OX2 (457 aa).

An FAD-binding site is contributed by 17–22 (GAGAAG). 211 to 216 (GNFASG) is an NADP(+) binding site.

The protein belongs to the FMO family.

It carries out the reaction a (Z)-omega-(methylsulfanyl)-N-sulfo-alkylhydroximate S-glucoside + NADPH + O2 + H(+) = a (Z)-omega-(methylsulfinyl)-alkyl-glucosinolate + NADP(+) + H2O. Functionally, catalyzes the conversion of methylthioalkyl glucosinolates of any chain length into methylsulfinylalkyl glucosinolates. The chain is Flavin-containing monooxygenase FMO GS-OX2 (FMOGS-OX2) from Arabidopsis thaliana (Mouse-ear cress).